The following is a 441-amino-acid chain: Homogentisate 1,2-dioxygenase (441 aa).

The active-site Proton acceptor is His-297. Fe cation is bound by residues His-340 and Glu-346. Residues Tyr-355 and His-376 each contribute to the homogentisate site. Residue His-376 coordinates Fe cation.

Belongs to the homogentisate dioxygenase family. As to quaternary structure, hexamer; dimer of trimers. Fe cation is required as a cofactor.

It carries out the reaction homogentisate + O2 = 4-maleylacetoacetate + H(+). It participates in amino-acid degradation; L-phenylalanine degradation; acetoacetate and fumarate from L-phenylalanine: step 4/6. In terms of biological role, involved in the catabolism of homogentisate (2,5-dihydroxyphenylacetate or 2,5-OH-PhAc), a central intermediate in the degradation of phenylalanine and tyrosine. Catalyzes the oxidative ring cleavage of the aromatic ring of homogentisate to yield maleylacetoacetate. This Streptomyces coelicolor (strain ATCC BAA-471 / A3(2) / M145) protein is Homogentisate 1,2-dioxygenase.